Consider the following 363-residue polypeptide: 3-dehydroquinate synthase (363 aa).

Residues 72–77, 106–110, 130–131, Lys142, and Lys151 each bind NAD(+); these read SGEQSK, GVIGD, and TT. Zn(2+) is bound by residues Glu184, His246, and His263.

The protein belongs to the sugar phosphate cyclases superfamily. Dehydroquinate synthase family. Requires Co(2+) as cofactor. Zn(2+) serves as cofactor. It depends on NAD(+) as a cofactor.

It is found in the cytoplasm. The catalysed reaction is 7-phospho-2-dehydro-3-deoxy-D-arabino-heptonate = 3-dehydroquinate + phosphate. Its pathway is metabolic intermediate biosynthesis; chorismate biosynthesis; chorismate from D-erythrose 4-phosphate and phosphoenolpyruvate: step 2/7. Functionally, catalyzes the conversion of 3-deoxy-D-arabino-heptulosonate 7-phosphate (DAHP) to dehydroquinate (DHQ). This Bacillus pumilus (strain SAFR-032) protein is 3-dehydroquinate synthase.